The sequence spans 329 residues: Neuropeptides B/W receptor type 1 (329 aa).

At 1 to 39 the chain is on the extracellular side; sequence MHNLSLFEPGRGNVSCGGPFLGCPNESNPAPLPLPQPLA. 3 N-linked (GlcNAc...) asparagine glycosylation sites follow: asparagine 3, asparagine 13, and asparagine 25. The chain crosses the membrane as a helical span at residues 40–63; it reads VAVPVVYGVICAVGLAGNSAVLYV. At 64–74 the chain is on the cytoplasmic side; the sequence is LLRTPRMKTVT. The chain crosses the membrane as a helical span at residues 75 to 99; sequence NVFILNLAIADELFTLVLPINIADF. The Extracellular segment spans residues 100–114; it reads LLRRWPFGEVMCKLI. Cysteine 111 and cysteine 190 are disulfide-bonded. A helical transmembrane segment spans residues 115 to 134; the sequence is VAVDQYNTFSSLYFLAVMSA. Residues 135 to 159 are Cytoplasmic-facing; it reads DRYLVVLATAESRRVSGRTYGAARA. The helical transmembrane segment at 160–179 threads the bilayer; sequence VSLAVWALVTLVVLPFAVFA. The Extracellular portion of the chain corresponds to 180–204; the sequence is RLDEEQGRRQCVLVFPQPEAFWWRA. The chain crosses the membrane as a helical span at residues 205–226; sequence SRLYTLVLGFAIPVSTICALYI. Residues 227 to 250 lie on the Cytoplasmic side of the membrane; that stretch reads TLLCRLRAIQLDSHAKALDRAKKR. The chain crosses the membrane as a helical span at residues 251–275; that stretch reads VTLLVVAILAVCLLCWTPYHLSTIV. Over 276–285 the chain is Extracellular; the sequence is ALTTDLPQTP. A helical membrane pass occupies residues 286–300; the sequence is LVIGISYFITSLSYA. Residues 301–329 are Cytoplasmic-facing; sequence NSCLNPFLYAFLDDSFRRSLRQLVSCRTA.

This sequence belongs to the G-protein coupled receptor 1 family.

It localises to the cell membrane. Functionally, interacts specifically with a number of opioid ligands. Receptor for neuropeptides B and W, which may be involved in neuroendocrine system regulation, food intake and the organization of other signals. This Rattus norvegicus (Rat) protein is Neuropeptides B/W receptor type 1 (Npbwr1).